Consider the following 368-residue polypeptide: uncharacterized protein (368 aa).

5 helical membrane-spanning segments follow: residues 22–42 (VAGI…FTLI), 74–94 (FVKP…LLVL), 104–124 (FLKT…LNLF), 144–164 (VGDF…GASL), and 168–188 (WGVN…AVSL).

This sequence belongs to the MscS (TC 1.A.23) family.

It localises to the cell membrane. This is an uncharacterized protein from Aquifex aeolicus (strain VF5).